The sequence spans 201 residues: Orotate phosphoribosyltransferase (201 aa).

113 to 121 serves as a coordination point for 5-phospho-alpha-D-ribose 1-diphosphate; it reads EDIITTGKS. Orotate is bound by residues Thr-117 and Arg-145.

It belongs to the purine/pyrimidine phosphoribosyltransferase family. PyrE subfamily. Homodimer. Mg(2+) is required as a cofactor.

The catalysed reaction is orotidine 5'-phosphate + diphosphate = orotate + 5-phospho-alpha-D-ribose 1-diphosphate. The protein operates within pyrimidine metabolism; UMP biosynthesis via de novo pathway; UMP from orotate: step 1/2. Its function is as follows. Catalyzes the transfer of a ribosyl phosphate group from 5-phosphoribose 1-diphosphate to orotate, leading to the formation of orotidine monophosphate (OMP). This is Orotate phosphoribosyltransferase from Helicobacter pylori (strain G27).